We begin with the raw amino-acid sequence, 356 residues long: Mannonate dehydratase (356 aa).

It belongs to the mannonate dehydratase family. The cofactor is Fe(2+). It depends on Mn(2+) as a cofactor.

It catalyses the reaction D-mannonate = 2-dehydro-3-deoxy-D-gluconate + H2O. The protein operates within carbohydrate metabolism; pentose and glucuronate interconversion. Functionally, catalyzes the dehydration of D-mannonate. In Levilactobacillus brevis (strain ATCC 367 / BCRC 12310 / CIP 105137 / JCM 1170 / LMG 11437 / NCIMB 947 / NCTC 947) (Lactobacillus brevis), this protein is Mannonate dehydratase.